The sequence spans 158 residues: Transcription elongation factor GreA (158 aa).

It belongs to the GreA/GreB family.

Functionally, necessary for efficient RNA polymerase transcription elongation past template-encoded arresting sites. The arresting sites in DNA have the property of trapping a certain fraction of elongating RNA polymerases that pass through, resulting in locked ternary complexes. Cleavage of the nascent transcript by cleavage factors such as GreA or GreB allows the resumption of elongation from the new 3'terminus. GreA releases sequences of 2 to 3 nucleotides. This chain is Transcription elongation factor GreA, found in Psychrobacter sp. (strain PRwf-1).